A 430-amino-acid polypeptide reads, in one-letter code: Glutamyl-tRNA reductase (430 aa).

Substrate-binding positions include 50-53 (TCNR), Ser108, 113-115 (EPQ), and Gln119. Residue Cys51 is the Nucleophile of the active site. Residue 188–193 (GAGEMA) coordinates NADP(+).

This sequence belongs to the glutamyl-tRNA reductase family. As to quaternary structure, homodimer.

It carries out the reaction (S)-4-amino-5-oxopentanoate + tRNA(Glu) + NADP(+) = L-glutamyl-tRNA(Glu) + NADPH + H(+). It participates in porphyrin-containing compound metabolism; protoporphyrin-IX biosynthesis; 5-aminolevulinate from L-glutamyl-tRNA(Glu): step 1/2. Catalyzes the NADPH-dependent reduction of glutamyl-tRNA(Glu) to glutamate 1-semialdehyde (GSA). In Desulfovibrio desulfuricans (strain ATCC 27774 / DSM 6949 / MB), this protein is Glutamyl-tRNA reductase.